We begin with the raw amino-acid sequence, 436 residues long: Gamma-glutamyl phosphate reductase (436 aa).

Belongs to the gamma-glutamyl phosphate reductase family.

It is found in the cytoplasm. The catalysed reaction is L-glutamate 5-semialdehyde + phosphate + NADP(+) = L-glutamyl 5-phosphate + NADPH + H(+). Its pathway is amino-acid biosynthesis; L-proline biosynthesis; L-glutamate 5-semialdehyde from L-glutamate: step 2/2. Functionally, catalyzes the NADPH-dependent reduction of L-glutamate 5-phosphate into L-glutamate 5-semialdehyde and phosphate. The product spontaneously undergoes cyclization to form 1-pyrroline-5-carboxylate. This chain is Gamma-glutamyl phosphate reductase, found in Prochlorococcus marinus (strain SARG / CCMP1375 / SS120).